A 199-amino-acid polypeptide reads, in one-letter code: Elongation factor Ts (199 aa).

Residues 81-84 (TDFV) are involved in Mg(2+) ion dislocation from EF-Tu.

Belongs to the EF-Ts family.

Its subcellular location is the cytoplasm. Functionally, associates with the EF-Tu.GDP complex and induces the exchange of GDP to GTP. It remains bound to the aminoacyl-tRNA.EF-Tu.GTP complex up to the GTP hydrolysis stage on the ribosome. The sequence is that of Elongation factor Ts from Thermotoga petrophila (strain ATCC BAA-488 / DSM 13995 / JCM 10881 / RKU-1).